The sequence spans 78 residues: Sec-independent protein translocase protein TatA (78 aa).

Residues 1-21 (MGSLSIWHWIVVIAVVLLLFG) form a helical membrane-spanning segment. A compositionally biased stretch (basic and acidic residues) spans 43–60 (LQDDEKTAEKSEPVKSID). Residues 43–78 (LQDDEKTAEKSEPVKSIDHTSTPGATNRTDVGSKAV) are disordered. A compositionally biased stretch (polar residues) spans 61–72 (HTSTPGATNRTD).

The protein belongs to the TatA/E family. The Tat system comprises two distinct complexes: a TatABC complex, containing multiple copies of TatA, TatB and TatC subunits, and a separate TatA complex, containing only TatA subunits. Substrates initially bind to the TatABC complex, which probably triggers association of the separate TatA complex to form the active translocon.

The protein localises to the cell inner membrane. Part of the twin-arginine translocation (Tat) system that transports large folded proteins containing a characteristic twin-arginine motif in their signal peptide across membranes. TatA could form the protein-conducting channel of the Tat system. This chain is Sec-independent protein translocase protein TatA, found in Rhodopseudomonas palustris (strain ATCC BAA-98 / CGA009).